We begin with the raw amino-acid sequence, 274 residues long: NH(3)-dependent NAD(+) synthetase (274 aa).

46–53 (GISGGQDS) contacts ATP. Asp52 contacts Mg(2+). A deamido-NAD(+)-binding site is contributed by Arg140. Thr160 is an ATP binding site. Residue Glu165 coordinates Mg(2+). The deamido-NAD(+) site is built by Lys173 and Asp180. ATP is bound by residues Lys189 and Thr211. Residue 260–261 (HK) coordinates deamido-NAD(+).

Belongs to the NAD synthetase family. Homodimer.

The catalysed reaction is deamido-NAD(+) + NH4(+) + ATP = AMP + diphosphate + NAD(+) + H(+). It participates in cofactor biosynthesis; NAD(+) biosynthesis; NAD(+) from deamido-NAD(+) (ammonia route): step 1/1. Functionally, catalyzes the ATP-dependent amidation of deamido-NAD to form NAD. Uses ammonia as a nitrogen source. The chain is NH(3)-dependent NAD(+) synthetase from Streptococcus pyogenes serotype M1.